We begin with the raw amino-acid sequence, 106 residues long: Large ribosomal subunit protein uL24 (106 aa).

The protein belongs to the universal ribosomal protein uL24 family. In terms of assembly, part of the 50S ribosomal subunit.

Its function is as follows. One of two assembly initiator proteins, it binds directly to the 5'-end of the 23S rRNA, where it nucleates assembly of the 50S subunit. Functionally, one of the proteins that surrounds the polypeptide exit tunnel on the outside of the subunit. This chain is Large ribosomal subunit protein uL24, found in Blochmanniella floridana.